The following is a 101-amino-acid chain: NAD(P)H-quinone oxidoreductase subunit 4L, chloroplastic (101 aa).

3 helical membrane passes run 2 to 22, 32 to 52, and 61 to 81; these read ILEHVLVLSAYLFLIGLYGLI, MCLELILNAVNMNFVTFSDFF, and IFCIFVIAIAAAEAAIGLAIV.

This sequence belongs to the complex I subunit 4L family. NDH is composed of at least 16 different subunits, 5 of which are encoded in the nucleus.

It is found in the plastid. It localises to the chloroplast thylakoid membrane. It carries out the reaction a plastoquinone + NADH + (n+1) H(+)(in) = a plastoquinol + NAD(+) + n H(+)(out). The catalysed reaction is a plastoquinone + NADPH + (n+1) H(+)(in) = a plastoquinol + NADP(+) + n H(+)(out). NDH shuttles electrons from NAD(P)H:plastoquinone, via FMN and iron-sulfur (Fe-S) centers, to quinones in the photosynthetic chain and possibly in a chloroplast respiratory chain. The immediate electron acceptor for the enzyme in this species is believed to be plastoquinone. Couples the redox reaction to proton translocation, and thus conserves the redox energy in a proton gradient. The polypeptide is NAD(P)H-quinone oxidoreductase subunit 4L, chloroplastic (Arabidopsis thaliana (Mouse-ear cress)).